A 412-amino-acid polypeptide reads, in one-letter code: Poly-beta-1,6-N-acetyl-D-glucosamine synthase (412 aa).

Helical transmembrane passes span 6-28 (FLLFYPVFMSIYWIVGSIYFYFT), 290-312 (LYILMFEQIISILWVYIVLLYLG), 332-354 (IFLLSSFTMTFINVIQFTVALFI), and 366-388 (LIFVSWYPTVYWIINAAVVLVAF).

It belongs to the glycosyltransferase 2 family.

The protein localises to the cell membrane. N-acetylglucosaminyltransferase that catalyzes the polymerization of single monomer units of UDP-N-acetylglucosamine to produce the linear homomer poly-beta-1,6-N-acetyl-D-glucosamine (PNAG, also referred to as PIA), a biofilm adhesin polysaccharide. Requires IcaD for full activity. The sequence is that of Poly-beta-1,6-N-acetyl-D-glucosamine synthase (icaA) from Staphylococcus aureus (strain MSSA476).